The sequence spans 243 residues: Homeobox protein goosecoid isoform A (243 aa).

The homeobox DNA-binding region spans 148 to 207 (KRRHRTIFTDEQLEALENLFQETKYPDVGTREQLARRVHLREEKVEVWFKNRRAKWRRQK). Residues 201-243 (AKWRRQKRSSSEESENAQKWNKSSKNSAEKADEQVKSDLDSDS) form a disordered region. Residues 217–226 (AQKWNKSSKN) are compositionally biased toward polar residues. A compositionally biased stretch (basic and acidic residues) spans 227 to 243 (SAEKADEQVKSDLDSDS).

This sequence belongs to the paired homeobox family. Bicoid subfamily. At the start of gastrulation, it is found in a patch of cells encompassing 60 degrees of arc on the dorsal marginal zone.

The protein resides in the nucleus. Its function is as follows. Plays a central role in executing Spemann's organizer phenomenon (the dorsal blastopore lip of the early Xenopus laevis gastrula can organize a complete secondary body axis when transplanted to another embryo). This chain is Homeobox protein goosecoid isoform A (gsc-a), found in Xenopus laevis (African clawed frog).